A 220-amino-acid chain; its full sequence is MKPAKSSPVQIARRGLMLVISSPSGAGKSTIARTLLETDKHIGLSVSVTTRPRRPSEVEGVHYHFKSVREFERLRDSDALLEWAEVHGNFYGTPREPVEQAMAEGRDMLFDIDWQGAQQLQEKMSADVVSIFVLPPTMTELQSRLHRRAEDSEEVIQTRLANSRAEIAHWREYDYVIVNDDLNTAFDAVQSIVKAERLRRDRRHGMFDFVRELLEETPSL.

The 180-residue stretch at 15–194 (GLMLVISSPS…AFDAVQSIVK (180 aa)) folds into the Guanylate kinase-like domain. Residue 22-29 (SPSGAGKS) coordinates ATP.

Belongs to the guanylate kinase family.

It localises to the cytoplasm. The enzyme catalyses GMP + ATP = GDP + ADP. Functionally, essential for recycling GMP and indirectly, cGMP. The polypeptide is Guanylate kinase (Rhizobium etli (strain ATCC 51251 / DSM 11541 / JCM 21823 / NBRC 15573 / CFN 42)).